Here is a 603-residue protein sequence, read N- to C-terminus: NADH-ubiquinone oxidoreductase chain 5 (603 aa).

Helical transmembrane passes span 4 to 24, 38 to 58, 89 to 109, 122 to 142, 171 to 191, 211 to 233, 241 to 261, 273 to 293, 301 to 320, 325 to 347, 366 to 386, 405 to 424, 457 to 477, 488 to 508, 537 to 557, and 582 to 602; these read FTTMTALTLTSLIPPITATLI, TAIASAFTISLIPTTMFICLG, FLPVALFVTWSIMEFSLWYMA, LIFLITMIILITANNLLQLFI, AILYNRIGDIGFILTLAWFLL, LPLLGLLLAAAGKSAQLGLHPWL, TPVSALLHSSTMVVAGIFLLI, IQTLALCLGAITTLFAAICAL, IVAFSTSSQLGLMMVTIGIN, AFLHICTHAFFKALLFMCSGSII, MPLTSTSLTISSLALAGMPFL, NAWALSITLIATSLTSAYST, LMTGSLFTGFLITSNIPPTSL, LAALTATLLGLLVALDLNYLA, IPHLSLLMSQNLSLLLLDLTW, and GMIKLYFLSFLIPLLLTLLMI.

It belongs to the complex I subunit 5 family. As to quaternary structure, core subunit of respiratory chain NADH dehydrogenase (Complex I) which is composed of 45 different subunits.

It localises to the mitochondrion inner membrane. It carries out the reaction a ubiquinone + NADH + 5 H(+)(in) = a ubiquinol + NAD(+) + 4 H(+)(out). Its function is as follows. Core subunit of the mitochondrial membrane respiratory chain NADH dehydrogenase (Complex I) which catalyzes electron transfer from NADH through the respiratory chain, using ubiquinone as an electron acceptor. Essential for the catalytic activity and assembly of complex I. The polypeptide is NADH-ubiquinone oxidoreductase chain 5 (MT-ND5) (Pongo pygmaeus (Bornean orangutan)).